Here is a 308-residue protein sequence, read N- to C-terminus: 3'(2'),5'-bisphosphate nucleotidase 1 (308 aa).

Ala2 bears the N-acetylalanine mark. Asp51 functions as the Proton acceptor in the catalytic mechanism. Mg(2+) contacts are provided by Glu74, Asp117, Leu119, and Asp120. The Proton acceptor role is filled by Thr122. A Phosphothreonine modification is found at Thr122. Thr195, His198, Gly220, and Lys224 together coordinate AMP. A Phosphoserine modification is found at Ser240. Residue Lys244 is modified to N6-succinyllysine. Asp247 is a Mg(2+) binding site.

The protein belongs to the inositol monophosphatase superfamily. Mg(2+) is required as a cofactor. Highly expressed in kidney, liver, pancreas and heart. Detected at lower levels in brain, placenta, lung and skeletal muscle.

It catalyses the reaction adenosine 3',5'-bisphosphate + H2O = AMP + phosphate. The enzyme catalyses adenosine 2',5'-bisphosphate + H2O = AMP + phosphate. It carries out the reaction 3'-phosphoadenylyl sulfate + H2O = adenosine 5'-phosphosulfate + phosphate. The catalysed reaction is 1D-myo-inositol 1,4-bisphosphate + H2O = 1D-myo-inositol 4-phosphate + phosphate. It catalyses the reaction 1D-myo-inositol 1,3,4-trisphosphate + H2O = 1D-myo-inositol 3,4-bisphosphate + phosphate. Its activity is regulated as follows. Is very sensitive to inhibition by Li(+) (IC(50)=0.3 mM for hydrolysis of PAP; IC(50)=0.6 mM for hydrolysis of inositol-1,4-bis-phosphate). Is not affected by high Na(+) concentrations. Phosphatase that converts 3'(2')-phosphoadenosine 5'-phosphate (PAP) to AMP and inositol 1,4-bisphosphate (Ins(1,4)P2) to inositol 4-phosphate. Is also able to hydrolyze adenosine 3'-phosphate 5'-phosphosulfate (PAPS) to adenosine 5'-phosphosulfate (APS). Probably prevents the toxic accumulation of PAP, a compound which inhibits a variety of proteins, including PAPS-utilizing enzymes such as sulfotransferases, and RNA processing enzymes. Could also play a role in inositol recycling and phosphoinositide metabolism. Is not active on 3'-AMP, inositol-1-phosphate and inositol-1,4,5-triphosphate. In Homo sapiens (Human), this protein is 3'(2'),5'-bisphosphate nucleotidase 1 (BPNT1).